The sequence spans 442 residues: 3-ketoacyl-CoA thiolase (442 aa).

Cysteine 105 serves as the catalytic Acyl-thioester intermediate. Active-site proton acceptor residues include histidine 398 and cysteine 428.

This sequence belongs to the thiolase-like superfamily. Thiolase family. As to quaternary structure, heterotetramer of two alpha chains (FadJ) and two beta chains (FadI).

Its subcellular location is the cytoplasm. It carries out the reaction an acyl-CoA + acetyl-CoA = a 3-oxoacyl-CoA + CoA. The protein operates within lipid metabolism; fatty acid beta-oxidation. Catalyzes the final step of fatty acid oxidation in which acetyl-CoA is released and the CoA ester of a fatty acid two carbons shorter is formed. The polypeptide is 3-ketoacyl-CoA thiolase (Aliivibrio fischeri (strain ATCC 700601 / ES114) (Vibrio fischeri)).